Here is a 342-residue protein sequence, read N- to C-terminus: N-alpha-acetyl-L-2,4-diaminobutyric acid deacetylase (342 aa).

The segment at 103–124 is disordered; sequence TAGRRTSPMDGGNLNRSFPGDP.

It belongs to the DoeB deacetylase family. It depends on Zn(2+) as a cofactor.

Its subcellular location is the cytoplasm. The catalysed reaction is (2S)-2-acetamido-4-aminobutanoate + H2O = L-2,4-diaminobutanoate + acetate. Its function is as follows. Involved in the degradation of ectoine, which allows H.elongata to utilize ectoine as both a carbon and a nitrogen source for growth. Catalyzes the deacetylation of N-alpha-acetyl-L-2,4-diaminobutyrate (N-alpha-Ac-DABA) to yield L-2,4-diaminobutyrate (DABA). The sequence is that of N-alpha-acetyl-L-2,4-diaminobutyric acid deacetylase from Halomonas elongata (strain ATCC 33173 / DSM 2581 / NBRC 15536 / NCIMB 2198 / 1H9).